Consider the following 375-residue polypeptide: Growth/differentiation factor 8 (375 aa).

The N-terminal stretch at 1–23 is a signal peptide; the sequence is MQKLAVYVYIYLFMQIAVDPVAL. A propeptide spanning residues 24–266 is cleaved from the precursor; it reads DGSSQPTENA…VTDTPKRSRR (243 aa). N-linked (GlcNAc...) asparagine glycosylation occurs at N71. Disulfide bonds link C272–C282, C281–C340, C309–C372, and C313–C374.

The protein belongs to the TGF-beta family. Homodimer; disulfide-linked.

Its subcellular location is the secreted. Its function is as follows. Acts specifically as a negative regulator of skeletal muscle growth. In Gallus gallus (Chicken), this protein is Growth/differentiation factor 8 (MSTN).